The following is a 505-amino-acid chain: L-arabinose isomerase (505 aa).

Mn(2+) contacts are provided by Glu-308, Glu-335, His-352, and His-453.

The protein belongs to the arabinose isomerase family. Mn(2+) serves as cofactor.

The enzyme catalyses beta-L-arabinopyranose = L-ribulose. Its pathway is carbohydrate degradation; L-arabinose degradation via L-ribulose; D-xylulose 5-phosphate from L-arabinose (bacterial route): step 1/3. In terms of biological role, catalyzes the conversion of L-arabinose to L-ribulose. The sequence is that of L-arabinose isomerase from Bifidobacterium longum (strain DJO10A).